We begin with the raw amino-acid sequence, 158 residues long: Endoribonuclease YbeY (158 aa).

Zn(2+) is bound by residues His119, His123, and His129.

The protein belongs to the endoribonuclease YbeY family. Zn(2+) serves as cofactor.

It localises to the cytoplasm. In terms of biological role, single strand-specific metallo-endoribonuclease involved in late-stage 70S ribosome quality control and in maturation of the 3' terminus of the 16S rRNA. The protein is Endoribonuclease YbeY of Shewanella woodyi (strain ATCC 51908 / MS32).